Here is a 57-residue protein sequence, read N- to C-terminus: UPF0391 membrane protein RL4195 (57 aa).

Helical transmembrane passes span 4 to 24 (WALI…SGVS) and 33 to 53 (VLFG…LMAG).

It belongs to the UPF0391 family.

It is found in the cell membrane. This chain is UPF0391 membrane protein RL4195, found in Rhizobium johnstonii (strain DSM 114642 / LMG 32736 / 3841) (Rhizobium leguminosarum bv. viciae).